The chain runs to 1357 residues: Mediator of RNA polymerase II transcription subunit 13 (1357 aa).

Disordered stretches follow at residues 356-391 (SCNYGPASRTKLTPSKAQDLRRSAAPLSADSFGNGF) and 420-487 (DLWN…HRKE). Polar residues predominate over residues 435–451 (INPTSQQGDSARITSGS).

It belongs to the Mediator complex subunit 13 family. In terms of assembly, component of the SRB8-11 complex, which itself associates with the Mediator complex.

It is found in the nucleus. Functionally, component of the SRB8-11 complex. The SRB8-11 complex is a regulatory module of the Mediator complex which is itself involved in regulation of basal and activated RNA polymerase II-dependent transcription. The SRB8-11 complex may be involved in the transcriptional repression of a subset of genes regulated by Mediator. It may inhibit the association of the Mediator complex with RNA polymerase II to form the holoenzyme complex. This Eremothecium gossypii (strain ATCC 10895 / CBS 109.51 / FGSC 9923 / NRRL Y-1056) (Yeast) protein is Mediator of RNA polymerase II transcription subunit 13 (SSN2).